The sequence spans 355 residues: Fructose-1,6-bisphosphatase (355 aa).

AMP contacts are provided by residues 25-30 and 37-41; these read ILDQQH and TGEFS. Positions 78 and 107 each coordinate Mg(2+). 121–122 contributes to the AMP binding site; it reads KY. Positions 127, 129, and 130 each coordinate Mg(2+). 130-133 contacts substrate; it reads DGSS. K149 is a binding site for AMP. Substrate is bound by residues 230–233, 263–268, Y284, and 294–296; these read NEGN, RYIGSM, and KLR. Residue E300 coordinates Mg(2+).

This sequence belongs to the FBPase class 1 family. Homotetramer. Requires Mg(2+) as cofactor.

It carries out the reaction beta-D-fructose 1,6-bisphosphate + H2O = beta-D-fructose 6-phosphate + phosphate. Its pathway is carbohydrate biosynthesis; gluconeogenesis. Its activity is regulated as follows. Subject to complex allosteric regulation. The enzyme can assume an active R-state, or an inactive T-state. Intermediate conformations may exist. AMP acts as allosteric inhibitor. AMP binding affects the turnover of bound substrate and not the affinity for substrate. This is Fructose-1,6-bisphosphatase (FBP1) from Kluyveromyces lactis (strain ATCC 8585 / CBS 2359 / DSM 70799 / NBRC 1267 / NRRL Y-1140 / WM37) (Yeast).